The primary structure comprises 274 residues: Large ribosomal subunit protein uL2 (274 aa).

Disordered stretches follow at residues 28-53 (KPYA…TVRH) and 223-274 (VAMN…RRTK). Residues 39 to 48 (KSGGRNNNGR) show a composition bias toward low complexity. Residues 254–274 (KGAKTRKNKRTDKFIVRRRTK) show a composition bias toward basic residues.

Belongs to the universal ribosomal protein uL2 family. In terms of assembly, part of the 50S ribosomal subunit. Forms a bridge to the 30S subunit in the 70S ribosome.

In terms of biological role, one of the primary rRNA binding proteins. Required for association of the 30S and 50S subunits to form the 70S ribosome, for tRNA binding and peptide bond formation. It has been suggested to have peptidyltransferase activity; this is somewhat controversial. Makes several contacts with the 16S rRNA in the 70S ribosome. The protein is Large ribosomal subunit protein uL2 of Pseudoalteromonas translucida (strain TAC 125).